We begin with the raw amino-acid sequence, 330 residues long: 4-hydroxythreonine-4-phosphate dehydrogenase (330 aa).

2 residues coordinate substrate: His-134 and Thr-135. A divalent metal cation is bound by residues His-164, His-209, and His-264. The substrate site is built by Lys-272, Asn-281, and Arg-290.

It belongs to the PdxA family. As to quaternary structure, homodimer. Zn(2+) serves as cofactor. Requires Mg(2+) as cofactor. The cofactor is Co(2+).

The protein resides in the cytoplasm. The enzyme catalyses 4-(phosphooxy)-L-threonine + NAD(+) = 3-amino-2-oxopropyl phosphate + CO2 + NADH. It functions in the pathway cofactor biosynthesis; pyridoxine 5'-phosphate biosynthesis; pyridoxine 5'-phosphate from D-erythrose 4-phosphate: step 4/5. Catalyzes the NAD(P)-dependent oxidation of 4-(phosphooxy)-L-threonine (HTP) into 2-amino-3-oxo-4-(phosphooxy)butyric acid which spontaneously decarboxylates to form 3-amino-2-oxopropyl phosphate (AHAP). This Pseudoalteromonas translucida (strain TAC 125) protein is 4-hydroxythreonine-4-phosphate dehydrogenase.